The following is a 393-amino-acid chain: Proteasome-activating nucleotidase (393 aa).

Positions 14 to 53 (SDEVQLVRLLEEKIKSLQIEIENLRKELNYYKAEMEKMLS) form a coiled coil. Residues 178–183 (GTGKTM) and tyrosine 317 contribute to the ATP site. The tract at residues 391 to 393 (KYS) is docks into pockets in the proteasome alpha-ring to cause gate opening.

The protein belongs to the AAA ATPase family. In terms of assembly, homohexamer. The hexameric complex has a two-ring architecture resembling a top hat that caps the 20S proteasome core at one or both ends. Upon ATP-binding, the C-terminus of PAN interacts with the alpha-rings of the proteasome core by binding to the intersubunit pockets.

It localises to the cytoplasm. Its function is as follows. ATPase which is responsible for recognizing, binding, unfolding and translocation of substrate proteins into the archaeal 20S proteasome core particle. Is essential for opening the gate of the 20S proteasome via an interaction with its C-terminus, thereby allowing substrate entry and access to the site of proteolysis. Thus, the C-termini of the proteasomal ATPase function like a 'key in a lock' to induce gate opening and therefore regulate proteolysis. Unfolding activity requires energy from ATP hydrolysis, whereas ATP binding alone promotes ATPase-20S proteasome association which triggers gate opening, and supports translocation of unfolded substrates. The sequence is that of Proteasome-activating nucleotidase from Saccharolobus islandicus (strain M.16.27) (Sulfolobus islandicus).